We begin with the raw amino-acid sequence, 102 residues long: Small ribosomal subunit protein uS10 (102 aa).

This sequence belongs to the universal ribosomal protein uS10 family. As to quaternary structure, part of the 30S ribosomal subunit.

Involved in the binding of tRNA to the ribosomes. The polypeptide is Small ribosomal subunit protein uS10 (Thermotoga maritima (strain ATCC 43589 / DSM 3109 / JCM 10099 / NBRC 100826 / MSB8)).